We begin with the raw amino-acid sequence, 293 residues long: Urease accessory protein UreD (293 aa).

The interval M1 to S22 is disordered. The span at A7–S22 shows a compositional bias: low complexity.

This sequence belongs to the UreD family. In terms of assembly, ureD, UreF and UreG form a complex that acts as a GTP-hydrolysis-dependent molecular chaperone, activating the urease apoprotein by helping to assemble the nickel containing metallocenter of UreC. The UreE protein probably delivers the nickel.

The protein resides in the cytoplasm. Its function is as follows. Required for maturation of urease via the functional incorporation of the urease nickel metallocenter. This chain is Urease accessory protein UreD, found in Alkalilimnicola ehrlichii (strain ATCC BAA-1101 / DSM 17681 / MLHE-1).